The primary structure comprises 140 residues: Fluoride-specific ion channel FluC 1 (140 aa).

The next 3 helical transmembrane spans lie at 45-65, 82-102, and 106-126; these read IPSLLGTFIVNVLGCIAIGFL, FLGAGLIGSFTTFSAFATQTI, and LFYGIIFIAANILCGLMGVFI. G89 and T92 together coordinate Na(+).

The protein belongs to the fluoride channel Fluc/FEX (TC 1.A.43) family.

The protein localises to the cell membrane. The enzyme catalyses fluoride(in) = fluoride(out). Na(+) is not transported, but it plays an essential structural role and its presence is essential for fluoride channel function. Functionally, fluoride-specific ion channel. Important for reducing fluoride concentration in the cell, thus reducing its toxicity. The polypeptide is Fluoride-specific ion channel FluC 1 (Methanospirillum hungatei JF-1 (strain ATCC 27890 / DSM 864 / NBRC 100397 / JF-1)).